An 81-amino-acid chain; its full sequence is Putative defensin-like protein 26 (81 aa).

Residues 1 to 21 (MASLKVFSFALLIVLTFSVIG) form the signal peptide. Intrachain disulfides connect Cys33–Cys81 and Cys52–Cys77.

It belongs to the DEFL family.

The protein resides in the secreted. The polypeptide is Putative defensin-like protein 26 (Arabidopsis thaliana (Mouse-ear cress)).